The following is a 404-amino-acid chain: Arginine biosynthesis bifunctional protein ArgJ (404 aa).

Substrate contacts are provided by threonine 166, lysine 189, threonine 200, glutamate 280, asparagine 399, and serine 404. Threonine 200 acts as the Nucleophile in catalysis.

The protein belongs to the ArgJ family. As to quaternary structure, heterotetramer of two alpha and two beta chains.

It localises to the cytoplasm. It catalyses the reaction N(2)-acetyl-L-ornithine + L-glutamate = N-acetyl-L-glutamate + L-ornithine. The catalysed reaction is L-glutamate + acetyl-CoA = N-acetyl-L-glutamate + CoA + H(+). It participates in amino-acid biosynthesis; L-arginine biosynthesis; L-ornithine and N-acetyl-L-glutamate from L-glutamate and N(2)-acetyl-L-ornithine (cyclic): step 1/1. The protein operates within amino-acid biosynthesis; L-arginine biosynthesis; N(2)-acetyl-L-ornithine from L-glutamate: step 1/4. In terms of biological role, catalyzes two activities which are involved in the cyclic version of arginine biosynthesis: the synthesis of N-acetylglutamate from glutamate and acetyl-CoA as the acetyl donor, and of ornithine by transacetylation between N(2)-acetylornithine and glutamate. This chain is Arginine biosynthesis bifunctional protein ArgJ, found in Mycobacterium bovis (strain ATCC BAA-935 / AF2122/97).